A 362-amino-acid chain; its full sequence is Porin Omp2b (362 aa).

A signal peptide spans 1–22 (MNIKSLLLGSAAALVAASGAQA).

Belongs to the alphaproteobacteria porin family. In terms of assembly, homotrimer.

The protein resides in the cell outer membrane. In terms of biological role, forms passive diffusion pores that allow small molecular weight hydrophilic materials across the outer membrane. The sequence is that of Porin Omp2b (omp2b) from Brucella neotomae.